Here is a 359-residue protein sequence, read N- to C-terminus: NAC transcription factor 47 (359 aa).

Positions 10–186 constitute an NAC domain; the sequence is LPPGFRFHPT…DWVLCRIYKK (177 aa). A DNA-binding region spans residues 112 to 192; the sequence is IGIKKALVFY…IYKKSHASLS (81 aa). Disordered regions lie at residues 147–166 and 200–226; these read KRIN…FGDR and TSNQ…LQND. Residues 148–165 are compositionally biased toward polar residues; it reads RINSSRSGGSEVNNNFGD.

The protein resides in the nucleus. Functionally, transcription factor that binds to the promoter of ACO5, an ACC oxidase involved in ethylene biosynthesis. Mediates waterlogging-induced hyponastic leaf movement, and cell expansion in abaxial cells of the basal petiole region, by directly regulating the expression of ACO5. Required for normal seed development and morphology. The chain is NAC transcription factor 47 from Arabidopsis thaliana (Mouse-ear cress).